Here is a 138-residue protein sequence, read N- to C-terminus: Small ribosomal subunit protein uS11c (138 aa).

Positions 1–21 are disordered; sequence MAKSISKIGSRKNARIGSRKQ. Positions 9–21 are enriched in basic residues; sequence GSRKNARIGSRKQ.

This sequence belongs to the universal ribosomal protein uS11 family. Part of the 30S ribosomal subunit.

The protein resides in the plastid. It localises to the chloroplast. The polypeptide is Small ribosomal subunit protein uS11c (Cicer arietinum (Chickpea)).